A 375-amino-acid chain; its full sequence is Outer membrane porin C (375 aa).

The N-terminal stretch at 1 to 21 is a signal peptide; it reads MKVKVLSLLVPALLVAGAANA. A beta stranded membrane pass occupies residues 22-27; it reads AEVYNK. The Periplasmic segment spans residues 28–29; it reads DG. A beta stranded membrane pass occupies residues 30–44; the sequence is NKLDLYGKVDGLHYF. Topologically, residues 45 to 50 are extracellular; that stretch reads SDDKSV. The beta stranded transmembrane segment at 51–66 threads the bilayer; sequence DGDQTYMRLGFKGETQ. At 67 to 70 the chain is on the periplasmic side; that stretch reads VTDQ. Residues 71–82 form a beta stranded membrane-spanning segment; that stretch reads LTGYGQWEYQIQ. The Extracellular segment spans residues 83–91; it reads GNAPESENN. Residues 92–103 traverse the membrane as a beta stranded segment; it reads SWTRVAFAGLKF. Residues 104–105 lie on the Periplasmic side of the membrane; sequence QD. A beta stranded membrane pass occupies residues 106–113; sequence IGSFDYGR. The Extracellular segment spans residues 114–146; sequence NYGVVYDVTSWTDVLPEFGGDTYGSDNFMQQRG. The chain crosses the membrane as a beta stranded span at residues 147 to 156; that stretch reads NGFATYRNTD. Topologically, residues 157–163 are periplasmic; sequence FFGLVDG. Residues 164-172 form a beta stranded membrane-spanning segment; sequence LNFAVQYQG. Over 173–201 the chain is Extracellular; the sequence is QNGSVSGENDPDFTGHGITNNGRKALRQN. The chain crosses the membrane as a beta stranded span at residues 202–212; it reads GDGVGGSITYD. The Periplasmic portion of the chain corresponds to 213–215; that stretch reads YEG. A beta stranded membrane pass occupies residues 216-226; that stretch reads FGVGAAVSSSK. At 227-241 the chain is on the extracellular side; the sequence is RTWDQNNTGLIGTGD. A beta stranded transmembrane segment spans residues 242–254; it reads RAETYTGGLKYDA. Residues 255–256 are Periplasmic-facing; that stretch reads NN. The beta stranded transmembrane segment at 257–267 threads the bilayer; that stretch reads IYLAAQYTQTY. Topologically, residues 268–279 are extracellular; the sequence is NATRVGSLGWAN. A beta stranded membrane pass occupies residues 280-292; that stretch reads KAQNFEAVAQYQF. Residues 293 to 294 are Periplasmic-facing; sequence DF. Residues 295 to 309 traverse the membrane as a beta stranded segment; that stretch reads GLRPSVAYLQSKGKN. Over 310–320 the chain is Extracellular; that stretch reads LGVVAGRNYDD. A beta stranded membrane pass occupies residues 321–335; sequence EDILKYVDVGATYYF. Residues 336 to 338 are Periplasmic-facing; sequence NKN. Residues 339 to 348 form a beta stranded membrane-spanning segment; it reads MSTYVDYKIN. At 349–364 the chain is on the extracellular side; the sequence is LLDDNQFTRAAGINTD. A beta stranded membrane pass occupies residues 365–375; it reads DIVALGLVYQF.

The protein belongs to the Gram-negative porin family. As to quaternary structure, homotrimer. Forms mixed heterotrimers with OmpF; other mixed heterotrimers are also probable. The N- and C-termini are two parts of the same strand. Extracellular loop 3 folds back into the lumen of the barrel forming a constriction zone that controls the pore size, while the trimer interface is formed by the packing of hydrophobic residues on the outer edges of beta strands 1 to 5 and further stabilized by extracellular loop 2 which reaches into the neighboring monomer.

It localises to the cell outer membrane. In terms of biological role, forms pores that allow passive diffusion of small molecules across the outer membrane, including some antibiotics. Variation of the residues in the constriction zone modifies the transverse electric field in the zone, altering antibiotic resistance. (Microbial infection) Is not susceptible to CdiA-EC536-mediated toxicity, which uses OmpC-OmpF heterotrimers of some strains as its outer membrane receptor. Mutagenesis of extracellular loops L4 or L5 of this protein confers susceptibility to the toxin. This Escherichia coli O6:H1 (strain CFT073 / ATCC 700928 / UPEC) protein is Outer membrane porin C (ompC).